The following is a 1133-amino-acid chain: Error-prone DNA polymerase (1133 aa).

It belongs to the DNA polymerase type-C family. DnaE2 subfamily.

The protein resides in the cytoplasm. It catalyses the reaction DNA(n) + a 2'-deoxyribonucleoside 5'-triphosphate = DNA(n+1) + diphosphate. In terms of biological role, DNA polymerase involved in damage-induced mutagenesis and translesion synthesis (TLS). It is not the major replicative DNA polymerase. The polypeptide is Error-prone DNA polymerase (Anaeromyxobacter sp. (strain K)).